A 211-amino-acid chain; its full sequence is Imidazole glycerol phosphate synthase subunit HisH (211 aa).

The Glutamine amidotransferase type-1 domain occupies 3 to 211 (VIAVIDYDMG…VSQIKAPVLV (209 aa)). C81 (nucleophile) is an active-site residue. Catalysis depends on residues H186 and E188.

Heterodimer of HisH and HisF.

The protein localises to the cytoplasm. The catalysed reaction is 5-[(5-phospho-1-deoxy-D-ribulos-1-ylimino)methylamino]-1-(5-phospho-beta-D-ribosyl)imidazole-4-carboxamide + L-glutamine = D-erythro-1-(imidazol-4-yl)glycerol 3-phosphate + 5-amino-1-(5-phospho-beta-D-ribosyl)imidazole-4-carboxamide + L-glutamate + H(+). The enzyme catalyses L-glutamine + H2O = L-glutamate + NH4(+). Its pathway is amino-acid biosynthesis; L-histidine biosynthesis; L-histidine from 5-phospho-alpha-D-ribose 1-diphosphate: step 5/9. Its function is as follows. IGPS catalyzes the conversion of PRFAR and glutamine to IGP, AICAR and glutamate. The HisH subunit catalyzes the hydrolysis of glutamine to glutamate and ammonia as part of the synthesis of IGP and AICAR. The resulting ammonia molecule is channeled to the active site of HisF. This is Imidazole glycerol phosphate synthase subunit HisH from Cyanothece sp. (strain PCC 7425 / ATCC 29141).